A 245-amino-acid polypeptide reads, in one-letter code: Orotidine 5'-phosphate decarboxylase (245 aa).

Residues aspartate 22, lysine 44, 71–80, threonine 131, arginine 192, glutamine 201, glycine 221, and arginine 222 each bind substrate; that span reads DLKFHDIPNT. The active-site Proton donor is the lysine 73.

This sequence belongs to the OMP decarboxylase family. Type 1 subfamily. In terms of assembly, homodimer.

It carries out the reaction orotidine 5'-phosphate + H(+) = UMP + CO2. The protein operates within pyrimidine metabolism; UMP biosynthesis via de novo pathway; UMP from orotate: step 2/2. Catalyzes the decarboxylation of orotidine 5'-monophosphate (OMP) to uridine 5'-monophosphate (UMP). The protein is Orotidine 5'-phosphate decarboxylase of Salmonella typhimurium (strain LT2 / SGSC1412 / ATCC 700720).